The chain runs to 285 residues: NADPH-dependent 7-cyano-7-deazaguanine reductase (285 aa).

A substrate-binding site is contributed by isoleucine 91–serine 93. Position 93 to 94 (serine 93 to lysine 94) interacts with NADPH. Cysteine 191 (thioimide intermediate) is an active-site residue. Aspartate 198 functions as the Proton donor in the catalytic mechanism. Histidine 230–glutamate 231 contacts substrate. Position 259 to 260 (arginine 259 to glycine 260) interacts with NADPH.

It belongs to the GTP cyclohydrolase I family. QueF type 2 subfamily. In terms of assembly, homodimer.

It localises to the cytoplasm. The catalysed reaction is 7-aminomethyl-7-carbaguanine + 2 NADP(+) = 7-cyano-7-deazaguanine + 2 NADPH + 3 H(+). It participates in tRNA modification; tRNA-queuosine biosynthesis. In terms of biological role, catalyzes the NADPH-dependent reduction of 7-cyano-7-deazaguanine (preQ0) to 7-aminomethyl-7-deazaguanine (preQ1). This Legionella pneumophila (strain Corby) protein is NADPH-dependent 7-cyano-7-deazaguanine reductase.